The primary structure comprises 424 residues: Histidine--tRNA ligase (424 aa).

It belongs to the class-II aminoacyl-tRNA synthetase family. Homodimer.

It is found in the cytoplasm. It carries out the reaction tRNA(His) + L-histidine + ATP = L-histidyl-tRNA(His) + AMP + diphosphate + H(+). The protein is Histidine--tRNA ligase of Shewanella amazonensis (strain ATCC BAA-1098 / SB2B).